A 313-amino-acid polypeptide reads, in one-letter code: MEEFHHLSVLAREVMEQLAPRPGGTYLDGTLGGGGHSELILEKIGPDGLLIGIDRDPAALAAASERLRRFGSCFRPLQGSFGDLAELLKQEGINTLDGLLLDLGVSSHQLDTDERGFSFRLDGPLDMRMDRSCGDSAADLLQDCSAGELEQIIKEFGEERWAKKIALRIVQTRQETPITTTLQLADLVAGTIPRRFHEERIHPATRTFQALRIAVNQELEQVEQGIRAGIAALKAGGRIAVISFHSLEDRIVKHLFREAATGCTCPPRMPYCVCNKKPQLRILTGRPVIAGPEETDRNPRARSAKLRAAEKLG.

Residues glycine 34–histidine 36, aspartate 54, phenylalanine 81, aspartate 102, and glutamine 109 contribute to the S-adenosyl-L-methionine site. Positions isoleucine 289–glycine 313 are disordered.

Belongs to the methyltransferase superfamily. RsmH family.

It is found in the cytoplasm. The catalysed reaction is cytidine(1402) in 16S rRNA + S-adenosyl-L-methionine = N(4)-methylcytidine(1402) in 16S rRNA + S-adenosyl-L-homocysteine + H(+). Functionally, specifically methylates the N4 position of cytidine in position 1402 (C1402) of 16S rRNA. The chain is Ribosomal RNA small subunit methyltransferase H from Trichlorobacter lovleyi (strain ATCC BAA-1151 / DSM 17278 / SZ) (Geobacter lovleyi).